The chain runs to 311 residues: Ornithine carbamoyltransferase (311 aa).

Carbamoyl phosphate-binding positions include 54 to 58, Asn-81, Arg-104, and 131 to 134; these read STRTR and HPCQ. Residues Asn-164, Asp-225, and 229 to 230 contribute to the L-ornithine site; that span reads DM. Carbamoyl phosphate is bound by residues 268–271, Thr-279, and Arg-297; that span reads HDMP.

Belongs to the aspartate/ornithine carbamoyltransferase superfamily. OTCase family.

The protein localises to the cytoplasm. It catalyses the reaction carbamoyl phosphate + L-ornithine = L-citrulline + phosphate + H(+). It participates in amino-acid biosynthesis; L-arginine biosynthesis; L-arginine from L-ornithine and carbamoyl phosphate: step 1/3. Reversibly catalyzes the transfer of the carbamoyl group from carbamoyl phosphate (CP) to the N(epsilon) atom of ornithine (ORN) to produce L-citrulline. This is Ornithine carbamoyltransferase (argF) from Leptospira interrogans serogroup Icterohaemorrhagiae serovar copenhageni (strain Fiocruz L1-130).